The sequence spans 1810 residues: Trinucleotide repeat-containing gene 6B protein (1810 aa).

Positions 1–22 (MQTNEGEVEEESSSQVEQEDFV) are enriched in acidic residues. Disordered stretches follow at residues 1-221 (MQTN…PNPI), 235-1080 (EEWP…KKQM), 1141-1196 (MRKD…SSPG), and 1293-1329 (ALQQ…NMVP). Residues 33-75 (GEESKQEKEQEREEQLMEDKKRKKEDKKKKEATQKVTEQKTKV) are a coiled coil. Basic and acidic residues-rich tracts occupy residues 34–52 (EESK…MEDK) and 60–77 (KKKE…KVPE). Residues 37 to 1028 (KQEKEQEREE…AMKPNSKSMQ (992 aa)) form an interaction with argonaute proteins region. Positions 88–106 (AASPIGSSPSPPVNGGNNA) are enriched in low complexity. Over residues 123-139 (MPREVPPRFRCQQDHKV) the composition is skewed to basic and acidic residues. Over residues 165-174 (APGANPNNNA) the composition is skewed to low complexity. Residues 180–190 (LLQSESGTAPE) show a composition bias toward polar residues. 2 stretches are compositionally biased toward low complexity: residues 207 to 220 (GPGA…SPNP) and 248 to 260 (SSEN…SASN). Polar residues-rich tracts occupy residues 261–290 (PGSE…SGNE) and 306–327 (QPPN…TSGQ). Composition is skewed to low complexity over residues 335–346 (GFSNFNPNSNPS), 363–380 (ETES…GQAS), and 416–425 (NSLNLSSPNP). Over residues 438 to 451 (GNTSRSTDAPSQST) the composition is skewed to polar residues. Residues 475 to 486 (SGQSNSGNNGNN) show a composition bias toward low complexity. 4 stretches are compositionally biased toward polar residues: residues 504 to 528 (GSKS…PQDN), 564 to 575 (GPNQPNSSTGAW), 611 to 623 (TGSN…SDSH), and 655 to 667 (LSNT…QIKQ). The segment covering 675 to 688 (EVPRPEGKSDKGTE) has biased composition (basic and acidic residues). Polar residues-rich tracts occupy residues 774–783 (QPNQGWTSGK) and 793–804 (VKNNNWESSANK). Gly residues predominate over residues 809–824 (WGEGGQNEIGTWGNGG). The segment covering 846 to 857 (TGRQPNSWNKQH) has biased composition (polar residues). Phosphoserine is present on Ser-913. Polar residues-rich tracts occupy residues 934-950 (NSYN…NSQG), 964-975 (TGKSASVWSKST), 1004-1027 (ASTT…SKSM), 1057-1072 (TAGS…SASW), and 1175-1195 (GNST…SSSP). The segment at 1191-1700 (LSSSPGLRAQ…LAEFATEDEV (510 aa)) is silencing domain; interaction with CNOT1 and PAN3. Positions 1295–1307 (QQQQQQQQQQQRQ) are enriched in low complexity. Residue Ser-1409 is modified to Phosphoserine. Position 1426 is a phosphothreonine (Thr-1426). The residue at position 1438 (Ser-1438) is a Phosphoserine. A Phosphothreonine modification is found at Thr-1441. Residues 1449-1467 (SNASWPPEFQPGVPWKGIQ) form a PABPC1-interacting motif-2 (PAM2) region. A disordered region spans residues 1568–1619 (SSRNTTPLTRPPPGLTNPKPASPWSSTAPRSVRGWGTQDSRIASASTWSDGG). Over residues 1604 to 1617 (TQDSRIASASTWSD) the composition is skewed to polar residues. The RRM domain occupies 1625 to 1697 (YWLVLHNLTP…TTILAEFATE (73 aa)). 2 disordered regions span residues 1706–1740 (QAQP…GPAL) and 1786–1810 (EDPH…SDSI). Over residues 1722–1733 (GWQSLETSQNQA) the composition is skewed to polar residues. Positions 1792–1801 (GSPAPLLPGD) are enriched in low complexity. A phosphoserine mark is found at Ser-1793 and Ser-1809.

The protein belongs to the GW182 family. As to quaternary structure, interacts with AGO1, AGO2, AGO3 and AGO4. Interacts with CNOT1; the interaction mediates the association with the CCR4-NOT complex. Interacts with PAN3; the interaction mediates the association with the PAN complex. Interacts with MOV10; the interaction is direct and RNA-dependent.

The protein localises to the cytoplasm. Its subcellular location is the P-body. Plays a role in RNA-mediated gene silencing by both micro-RNAs (miRNAs) and short interfering RNAs (siRNAs). Required for miRNA-dependent translational repression and siRNA-dependent endonucleolytic cleavage of complementary mRNAs by argonaute family proteins. As scaffolding protein associates with argonaute proteins bound to partially complementary mRNAs and simultaneously can recruit CCR4-NOT and PAN deadenylase complexes. This is Trinucleotide repeat-containing gene 6B protein (Tnrc6b) from Mus musculus (Mouse).